A 154-amino-acid chain; its full sequence is MGLSEAEWQLVLHVWAKVEADLSGHGQEILIRLFKGHPETLEKFDKFKHLKSEAEMKASEDLKKHGHTVLTALGGILKKKGHHEAELKPLAQSHATKHKIPIKYLEFISDAIIHVLHSKHPSDFGADAQGAMTKALELFRKDIAAKYKELGFHG.

Residues 2–148 (GLSEAEWQLV…FRKDIAAKYK (147 aa)) enclose the Globin domain. A Phosphoserine modification is found at Ser-4. His-65 is a nitrite binding site. His-65 provides a ligand contact to O2. Position 68 is a phosphothreonine (Thr-68). His-94 contributes to the heme b binding site.

The protein belongs to the globin family. Monomeric.

It is found in the cytoplasm. It localises to the sarcoplasm. It carries out the reaction Fe(III)-heme b-[protein] + nitric oxide + H2O = Fe(II)-heme b-[protein] + nitrite + 2 H(+). It catalyses the reaction H2O2 + AH2 = A + 2 H2O. In terms of biological role, monomeric heme protein which primary function is to store oxygen and facilitate its diffusion within muscle tissues. Reversibly binds oxygen through a pentacoordinated heme iron and enables its timely and efficient release as needed during periods of heightened demand. Depending on the oxidative conditions of tissues and cells, and in addition to its ability to bind oxygen, it also has a nitrite reductase activity whereby it regulates the production of bioactive nitric oxide. Under stress conditions, like hypoxia and anoxia, it also protects cells against reactive oxygen species thanks to its pseudoperoxidase activity. The chain is Myoglobin (MB) from Mesoplodon carlhubbsi (Hubb's beaked whale).